The following is a 122-amino-acid chain: Basic phospholipase A2 homolog ecarpholin S (122 aa).

7 disulfides stabilise this stretch: Cys-26-Cys-115, Cys-28-Cys-44, Cys-43-Cys-95, Cys-49-Cys-122, Cys-50-Cys-88, Cys-57-Cys-81, and Cys-75-Cys-86. The segment at 105 to 117 is important for membrane-damaging activities in eukaryotes and bacteria; heparin-binding; that stretch reads KKYTYYPNFWCKG.

In terms of tissue distribution, expressed by the venom gland.

The protein resides in the secreted. Suramin inhibits the myotoxic activity. Its function is as follows. Snake venom phospholipase A2 homolog that lacks enzymatic activity. Shows high myotoxin activities and displays edema-inducing activities. The polypeptide is Basic phospholipase A2 homolog ecarpholin S (Echis carinatus (Saw-scaled viper)).